A 210-amino-acid chain; its full sequence is Imidazoleglycerol-phosphate dehydratase (210 aa).

Positions 185 to 210 (PRRGGSIPSSKGVLEQAGDNNTEKSK) are disordered.

This sequence belongs to the imidazoleglycerol-phosphate dehydratase family.

Its subcellular location is the cytoplasm. It carries out the reaction D-erythro-1-(imidazol-4-yl)glycerol 3-phosphate = 3-(imidazol-4-yl)-2-oxopropyl phosphate + H2O. It participates in amino-acid biosynthesis; L-histidine biosynthesis; L-histidine from 5-phospho-alpha-D-ribose 1-diphosphate: step 6/9. This Prochlorococcus marinus (strain SARG / CCMP1375 / SS120) protein is Imidazoleglycerol-phosphate dehydratase.